The sequence spans 202 residues: Holliday junction branch migration complex subunit RuvA (202 aa).

Residues 1–64 (MIGRLRGSLA…EDAHLLYGFY (64 aa)) form a domain I region. The interval 65 to 143 (EKRERELFRE…AWEALPGTFT (79 aa)) is domain II. The interval 144 to 153 (LVSNGPNQAE) is flexible linker. The segment at 154–202 (PVASAESDAVSALISLGYKPQEASKAVSAIKEKDLSSADLIRRALKGMG) is domain III.

The protein belongs to the RuvA family. As to quaternary structure, homotetramer. Forms an RuvA(8)-RuvB(12)-Holliday junction (HJ) complex. HJ DNA is sandwiched between 2 RuvA tetramers; dsDNA enters through RuvA and exits via RuvB. An RuvB hexamer assembles on each DNA strand where it exits the tetramer. Each RuvB hexamer is contacted by two RuvA subunits (via domain III) on 2 adjacent RuvB subunits; this complex drives branch migration. In the full resolvosome a probable DNA-RuvA(4)-RuvB(12)-RuvC(2) complex forms which resolves the HJ.

It localises to the cytoplasm. Functionally, the RuvA-RuvB-RuvC complex processes Holliday junction (HJ) DNA during genetic recombination and DNA repair, while the RuvA-RuvB complex plays an important role in the rescue of blocked DNA replication forks via replication fork reversal (RFR). RuvA specifically binds to HJ cruciform DNA, conferring on it an open structure. The RuvB hexamer acts as an ATP-dependent pump, pulling dsDNA into and through the RuvAB complex. HJ branch migration allows RuvC to scan DNA until it finds its consensus sequence, where it cleaves and resolves the cruciform DNA. The protein is Holliday junction branch migration complex subunit RuvA of Pseudomonas syringae pv. syringae (strain B728a).